We begin with the raw amino-acid sequence, 442 residues long: D-serine dehydratase (442 aa).

K118 carries the N6-(pyridoxal phosphate)lysine modification.

It belongs to the serine/threonine dehydratase family. DsdA subfamily. Monomer. It depends on pyridoxal 5'-phosphate as a cofactor.

It catalyses the reaction D-serine = pyruvate + NH4(+). The protein is D-serine dehydratase of Shigella dysenteriae serotype 1 (strain Sd197).